The chain runs to 233 residues: uncharacterized protein (233 aa).

Belongs to the LutC/YkgG family.

This is an uncharacterized protein from Neisseria meningitidis serogroup B (strain ATCC BAA-335 / MC58).